The sequence spans 882 residues: Protein translocase subunit SecA (882 aa).

ATP contacts are provided by residues glutamine 79, 97-101 (GEGKT), and aspartate 487.

The protein belongs to the SecA family.

It localises to the plastid. Its subcellular location is the chloroplast stroma. It is found in the chloroplast thylakoid membrane. The catalysed reaction is ATP + H2O + cellular proteinSide 1 = ADP + phosphate + cellular proteinSide 2.. Has a central role in coupling the hydrolysis of ATP to the transfer of proteins across the thylakoid membrane. The polypeptide is Protein translocase subunit SecA (Gracilaria tenuistipitata var. liui (Red alga)).